The primary structure comprises 217 residues: 3-demethoxyubiquinol 3-hydroxylase (217 aa).

Glu66, Glu96, His99, Glu148, Glu180, and His183 together coordinate Fe cation.

The protein belongs to the COQ7 family. Fe cation is required as a cofactor.

The protein resides in the cell membrane. The catalysed reaction is a 5-methoxy-2-methyl-3-(all-trans-polyprenyl)benzene-1,4-diol + AH2 + O2 = a 3-demethylubiquinol + A + H2O. Its pathway is cofactor biosynthesis; ubiquinone biosynthesis. In terms of biological role, catalyzes the hydroxylation of 2-nonaprenyl-3-methyl-6-methoxy-1,4-benzoquinol during ubiquinone biosynthesis. This Xanthomonas campestris pv. campestris (strain 8004) protein is 3-demethoxyubiquinol 3-hydroxylase.